The following is a 669-amino-acid chain: Trifunctional UDP-glucose 4,6-dehydratase/UDP-4-keto-6-deoxy-D-glucose 3,5-epimerase/UDP-4-keto-L-rhamnose-reductase RHM1 (669 aa).

Residue 13–19 (GAAGFIA) participates in NAD(+) binding. Thr-132 contributes to the substrate binding site. The Proton donor role is filled by Asp-133. Residues Glu-134 and Tyr-159 each act as proton acceptor in the active site. Residue 391 to 397 (GKTGWIG) coordinates NADP(+).

The protein in the N-terminal section; belongs to the NAD(P)-dependent epimerase/dehydratase family. dTDP-glucose dehydratase subfamily. In the C-terminal section; belongs to the dTDP-4-dehydrorhamnose reductase family. Requires NAD(+) as cofactor. NADP(+) is required as a cofactor. Expressed in roots, stems, leaves, seedlings, inflorescence tips, and siliques. Detected in the adaxial side of cotyledons, in the emerging leaves and in trichomes. Also detected in the root tip, more precisely in the epidermal cells in the meristematic and elongation zone.

The protein localises to the cytoplasm. The protein resides in the cytosol. It carries out the reaction UDP-alpha-D-glucose = UDP-4-dehydro-6-deoxy-alpha-D-glucose + H2O. Its pathway is carbohydrate biosynthesis. Its function is as follows. Trifunctional enzyme involved in UDP-beta-L-rhamnose biosynthesis, a precursor of the primary cell wall components rhamnogalacturonan I (RG-I) and rhamnogalacturonan II (RG-II). Plays a major role in supplying UDP-rhamnose for flavonol biosynthesis. Catalyzes the dehydration of UDP-glucose to form UDP-4-dehydro-6-deoxy-D-glucose followed by the epimerization of the C3' and C5' positions of UDP-4-dehydro-6-deoxy-D-glucose to form UDP-4-keto-beta-L-rhamnose and the reduction of UDP-4-keto-beta-L-rhamnose to yield UDP-beta-L-rhamnose. The chain is Trifunctional UDP-glucose 4,6-dehydratase/UDP-4-keto-6-deoxy-D-glucose 3,5-epimerase/UDP-4-keto-L-rhamnose-reductase RHM1 from Arabidopsis thaliana (Mouse-ear cress).